The primary structure comprises 46 residues: Succinate dehydrogenase subunit 8, mitochondrial (46 aa).

In terms of assembly, component of complex II composed of eight subunits in plants: four classical SDH subunits SDH1, SDH2, SDH3 and SDH4 (a flavoprotein (FP), an iron-sulfur protein (IP), and a cytochrome b composed of a large and a small subunit.), as well as four subunits unknown in mitochondria from bacteria and heterotrophic eukaryotes.

It is found in the mitochondrion inner membrane. It functions in the pathway carbohydrate metabolism; tricarboxylic acid cycle. The polypeptide is Succinate dehydrogenase subunit 8, mitochondrial (Arabidopsis thaliana (Mouse-ear cress)).